Reading from the N-terminus, the 143-residue chain is Nucleoside diphosphate kinase (143 aa).

ATP contacts are provided by Lys-11, Phe-59, Arg-87, Thr-93, Arg-104, and Asn-114. The active-site Pros-phosphohistidine intermediate is the His-117.

This sequence belongs to the NDK family. In terms of assembly, homotetramer. It depends on Mg(2+) as a cofactor.

It localises to the cytoplasm. The catalysed reaction is a 2'-deoxyribonucleoside 5'-diphosphate + ATP = a 2'-deoxyribonucleoside 5'-triphosphate + ADP. The enzyme catalyses a ribonucleoside 5'-diphosphate + ATP = a ribonucleoside 5'-triphosphate + ADP. Functionally, major role in the synthesis of nucleoside triphosphates other than ATP. The ATP gamma phosphate is transferred to the NDP beta phosphate via a ping-pong mechanism, using a phosphorylated active-site intermediate. This Tolumonas auensis (strain DSM 9187 / NBRC 110442 / TA 4) protein is Nucleoside diphosphate kinase.